The sequence spans 448 residues: MSQTNPKVGIVSLGCSKALVDSERILTKLRAEGYDISGSYDGADVVIVNTCGFLDSARAESLEAIGEALAENGKVIVTGCMGGDEKAIRSAHPSVLAVSGPHQYQAVVEAVHAAIPPLHDPKLSLVPPEGLHLTPHHYAYLKISEGCNNSCSFCIIPDIRGPLMSRPAADVLGEAERLAEAGVRELLVISQDTSAYGLDLRHAESTWRGRPVRAHLTDLASALGELGIWIRLHYVYPYPHVDEIIPLMAEGKILPYLDIPFQHASPNVLKAMRRPANQEKVLGRIRSWRETCPDLTLRSTFIVGFPGETEEDFDSLLGWLEEAQLDRVGCFKYEDVKGAPANAFADQVDEDVKEERHQRFMEAARQIADERGAAKEGTRIEVIIDEVDEEGAIGRSKADSPEVDGAVFMNGETDLEPGDLVIVEVEAAEDYDLWGDVVERLPPPRPRR.

Positions 6–116 (PKVGIVSLGC…VVEAVHAAIP (111 aa)) constitute an MTTase N-terminal domain. C15, C51, C80, C147, C151, and C154 together coordinate [4Fe-4S] cluster. The 239-residue stretch at 133-371 (LTPHHYAYLK…EAARQIADER (239 aa)) folds into the Radical SAM core domain. The 67-residue stretch at 373-439 (AAKEGTRIEV…DYDLWGDVVE (67 aa)) folds into the TRAM domain.

This sequence belongs to the methylthiotransferase family. RimO subfamily. It depends on [4Fe-4S] cluster as a cofactor.

The protein localises to the cytoplasm. The enzyme catalyses L-aspartate(89)-[ribosomal protein uS12]-hydrogen + (sulfur carrier)-SH + AH2 + 2 S-adenosyl-L-methionine = 3-methylsulfanyl-L-aspartate(89)-[ribosomal protein uS12]-hydrogen + (sulfur carrier)-H + 5'-deoxyadenosine + L-methionine + A + S-adenosyl-L-homocysteine + 2 H(+). Its function is as follows. Catalyzes the methylthiolation of an aspartic acid residue of ribosomal protein uS12. This chain is Ribosomal protein uS12 methylthiotransferase RimO, found in Paramagnetospirillum magneticum (strain ATCC 700264 / AMB-1) (Magnetospirillum magneticum).